We begin with the raw amino-acid sequence, 451 residues long: COBRA-like protein 6 (451 aa).

The N-terminal stretch at 1 to 21 is a signal peptide; that stretch reads MAVLGSLLLLILAATLSVAVA. N-linked (GlcNAc...) asparagine glycosylation is found at asparagine 30, asparagine 155, asparagine 163, asparagine 202, asparagine 227, asparagine 323, asparagine 338, and asparagine 357. The GPI-anchor amidated asparagine moiety is linked to residue asparagine 426. The propeptide at 427–451 is removed in mature form; the sequence is AAPPAAASLVGSAVAMAALVFFLMA.

Belongs to the COBRA family.

It localises to the cell membrane. Its function is as follows. Involved in determining the orientation of cell expansion, probably by playing an important role in cellulose deposition. May act by recruiting cellulose synthesizing complexes to discrete positions on the cell surface. This chain is COBRA-like protein 6 (BC1L7), found in Oryza sativa subsp. japonica (Rice).